The primary structure comprises 253 residues: Troponin T, fast skeletal muscle isoforms (253 aa).

Residues 1-25 (MSDTEEVEHGEEEYEEEEEVQEEEV) show a composition bias toward acidic residues. Disordered regions lie at residues 1–58 (MSDT…DIQK) and 97–178 (RAER…VLAE). Ser2 is subject to N-acetylserine. Basic and acidic residues-rich tracts occupy residues 46–58 (PEGE…DIQK), 97–139 (RAER…DDLK), and 167–178 (TARETKKKVLAE).

This sequence belongs to the troponin T family.

Functionally, troponin T is the tropomyosin-binding subunit of troponin, the thin filament regulatory complex which confers calcium-sensitivity to striated muscle actomyosin ATPase activity. The chain is Troponin T, fast skeletal muscle isoforms (TNNT3) from Coturnix japonica (Japanese quail).